A 533-amino-acid polypeptide reads, in one-letter code: Laccase-2 (533 aa).

The signal sequence occupies residues 1-23 (MFPGARILATLTLALHLLHGAHA). Plastocyanin-like domains lie at 25–171 (IGPA…LSLY), 173–336 (IDNA…LETN), and 382–501 (TAPV…FAED). Positions 98, 100, 143, and 145 each coordinate Cu cation. Cystine bridges form between Cys119-Cys516 and Cys151-Cys238. 3 residues coordinate Cu cation: His427, His430, and His432. Asn467 carries an N-linked (GlcNAc...) (high mannose) asparagine glycan. Residues His483, Cys484, His485, and His489 each coordinate Cu cation.

The protein belongs to the multicopper oxidase family. The cofactor is Cu cation. Post-translationally, N-glycosylated at Asn-467; contains a high-mannose glycan with a varying number of mannose residues.

It is found in the secreted. The enzyme catalyses 4 hydroquinone + O2 = 4 benzosemiquinone + 2 H2O. Lignin degradation and detoxification of lignin-derived products. This is Laccase-2 (POX2) from Pleurotus ostreatus (Oyster mushroom).